The sequence spans 610 residues: UvrABC system protein C (610 aa).

The GIY-YIG domain occupies 16-94; it reads SQPGVYRMYD…IKLYQPRYNV (79 aa). Residues 204 to 239 form the UVR domain; sequence DQVLTQLIARMEKASQDLAFEEAARIRDQIQAVRRV.

It belongs to the UvrC family. As to quaternary structure, interacts with UvrB in an incision complex.

It localises to the cytoplasm. Functionally, the UvrABC repair system catalyzes the recognition and processing of DNA lesions. UvrC both incises the 5' and 3' sides of the lesion. The N-terminal half is responsible for the 3' incision and the C-terminal half is responsible for the 5' incision. The chain is UvrABC system protein C from Salmonella paratyphi A (strain ATCC 9150 / SARB42).